Here is a 457-residue protein sequence, read N- to C-terminus: tRNA-2-methylthio-N(6)-dimethylallyladenosine synthase (457 aa).

The 116-residue stretch at 8-123 (KKVFIKTFGC…LPEMLARRDA (116 aa)) folds into the MTTase N-terminal domain. Positions 17, 54, 86, 160, 164, and 167 each coordinate [4Fe-4S] cluster. Residues 146–379 (RVDGATAFVS…QEAIEANGRR (234 aa)) enclose the Radical SAM core domain. A TRAM domain is found at 382–449 (QSRVGTVQRI…PHSLRGEVLL (68 aa)).

The protein belongs to the methylthiotransferase family. MiaB subfamily. In terms of assembly, monomer. The cofactor is [4Fe-4S] cluster.

The protein resides in the cytoplasm. The catalysed reaction is N(6)-dimethylallyladenosine(37) in tRNA + (sulfur carrier)-SH + AH2 + 2 S-adenosyl-L-methionine = 2-methylsulfanyl-N(6)-dimethylallyladenosine(37) in tRNA + (sulfur carrier)-H + 5'-deoxyadenosine + L-methionine + A + S-adenosyl-L-homocysteine + 2 H(+). In terms of biological role, catalyzes the methylthiolation of N6-(dimethylallyl)adenosine (i(6)A), leading to the formation of 2-methylthio-N6-(dimethylallyl)adenosine (ms(2)i(6)A) at position 37 in tRNAs that read codons beginning with uridine. This is tRNA-2-methylthio-N(6)-dimethylallyladenosine synthase from Methylibium petroleiphilum (strain ATCC BAA-1232 / LMG 22953 / PM1).